A 1009-amino-acid polypeptide reads, in one-letter code: Mediator of RNA polymerase II transcription subunit 5 (1009 aa).

Belongs to the Mediator complex subunit 5 family. As to quaternary structure, component of the Mediator complex.

The protein resides in the nucleus. Functionally, component of the Mediator complex, a coactivator involved in the regulated transcription of nearly all RNA polymerase II-dependent genes. Mediator functions as a bridge to convey information from gene-specific regulatory proteins to the basal RNA polymerase II transcription machinery. Mediator is recruited to promoters by direct interactions with regulatory proteins and serves as a scaffold for the assembly of a functional preinitiation complex with RNA polymerase II and the general transcription factors. This chain is Mediator of RNA polymerase II transcription subunit 5 (nut1), found in Neosartorya fischeri (strain ATCC 1020 / DSM 3700 / CBS 544.65 / FGSC A1164 / JCM 1740 / NRRL 181 / WB 181) (Aspergillus fischerianus).